Here is a 1107-residue protein sequence, read N- to C-terminus: Miniconductance mechanosensitive channel MscM (1107 aa).

The signal sequence occupies residues 1–19; sequence MRLIITFLMAWCLSWGAYA. 11 consecutive transmembrane segments (helical) span residues 467 to 487, 522 to 542, 551 to 571, 600 to 620, 628 to 648, 674 to 694, 698 to 718, 785 to 805, 828 to 848, 875 to 895, and 910 to 930; these read VMMLTSKETILPLFGALILVG, LFWSILVASPLPVLWMTLGYG, LAVAIGDGVTATVPLLWVVMI, YLMSIGLIVPLIMALMMFDNL, SLGRLCFILICGALAVVTLSL, MMIGAPLVAILASAVGYLATA, LARLETSVAIWFLLLVVYHVI, ILMLIALLSVIVLWSEIHSAF, PITLGAVLIAILVFIITTQLV, TITKYLLMLIGGLVGFSMIGI, and GLGFGLQEIFANFISGLIILF.

The protein belongs to the MscS (TC 1.A.23) family. As to quaternary structure, homoheptamer.

The protein resides in the cell inner membrane. Functionally, mechanosensitive channel that protects cells against hypoosmotic stress when highly overexpressed. Gates spontaneously in response to increased membrane tension. The protein is Miniconductance mechanosensitive channel MscM (mscM) of Escherichia coli (strain K12).